A 370-amino-acid polypeptide reads, in one-letter code: 2-aminoethylphosphonate--pyruvate transaminase (370 aa).

Residue Lys-194 is modified to N6-(pyridoxal phosphate)lysine.

Belongs to the class-V pyridoxal-phosphate-dependent aminotransferase family. PhnW subfamily. As to quaternary structure, homodimer. The cofactor is pyridoxal 5'-phosphate.

The enzyme catalyses (2-aminoethyl)phosphonate + pyruvate = phosphonoacetaldehyde + L-alanine. Functionally, involved in phosphonate degradation. In Paraburkholderia phymatum (strain DSM 17167 / CIP 108236 / LMG 21445 / STM815) (Burkholderia phymatum), this protein is 2-aminoethylphosphonate--pyruvate transaminase.